A 46-amino-acid chain; its full sequence is Diuretic hormone (46 aa).

The residue at position 46 (Ile-46) is an Isoleucine amide.

Belongs to the sauvagine/corticotropin-releasing factor/urotensin I family.

Its subcellular location is the secreted. Its function is as follows. Regulation of fluid secretion. Stimulates primary urine secretion by Malpighian tubules and causes a dose-dependent stimulation of cAMP levels in the tubules. This chain is Diuretic hormone, found in Locusta migratoria (Migratory locust).